We begin with the raw amino-acid sequence, 101 residues long: Small ribosomal subunit protein uS14 (101 aa).

Belongs to the universal ribosomal protein uS14 family. As to quaternary structure, part of the 30S ribosomal subunit. Contacts proteins S3 and S10.

Binds 16S rRNA, required for the assembly of 30S particles and may also be responsible for determining the conformation of the 16S rRNA at the A site. This is Small ribosomal subunit protein uS14 from Shewanella frigidimarina (strain NCIMB 400).